Reading from the N-terminus, the 81-residue chain is Large ribosomal subunit protein bL27 (81 aa).

The tract at residues 1-22 (MAHKTGQSSSSNGRESKSKRLG) is disordered.

The protein belongs to the bacterial ribosomal protein bL27 family.

The protein is Large ribosomal subunit protein bL27 of Opitutus terrae (strain DSM 11246 / JCM 15787 / PB90-1).